The chain runs to 428 residues: Probable mitochondrial adenine nucleotide transporter BTL3 (428 aa).

Solcar repeat units follow at residues 129–212 (LNTT…YRGQ), 222–307 (TTNF…LKSA), and 336–421 (LGPM…MKVV). The next 6 membrane-spanning stretches (helical) occupy residues 132-152 (TKHLWAGAFAAMVSRTCIAPL), 187-207 (GNLVNILRTAPFKSINFYAYD), 228-248 (FVAGAAAGVTASLLCLPLDTI), 283-303 (LVPSLVSMAPSGAVFYGVYDI), 342-362 (LLYGAIAGACSEAATYPFEVV), and 390-410 (VPALYAGLIPSLLQVLPSAAI).

This sequence belongs to the mitochondrial carrier (TC 2.A.29) family.

It is found in the mitochondrion inner membrane. Its function is as follows. Probable mitochondrial adenylate carrier that catalyzes the transport of ATP, ADP and AMP. The chain is Probable mitochondrial adenine nucleotide transporter BTL3 from Arabidopsis thaliana (Mouse-ear cress).